We begin with the raw amino-acid sequence, 205 residues long: Recombination protein RecR (205 aa).

Residues 60–75 form a C4-type zinc finger; sequence CKVCHNISDTETCRIC. The Toprim domain maps to 83-178; the sequence is STICVVESIR…KLSVIARGIS (96 aa).

Belongs to the RecR family.

Functionally, may play a role in DNA repair. It seems to be involved in an RecBC-independent recombinational process of DNA repair. It may act with RecF and RecO. In Phocaeicola vulgatus (strain ATCC 8482 / DSM 1447 / JCM 5826 / CCUG 4940 / NBRC 14291 / NCTC 11154) (Bacteroides vulgatus), this protein is Recombination protein RecR.